Reading from the N-terminus, the 255-residue chain is Membrane protein insertase YidC 2 (255 aa).

Positions 1–20 (MKKKLGLLAMVVALMAITAG) are cleaved as a signal peptide. Cys21 carries the N-palmitoyl cysteine lipid modification. Residue Cys21 is the site of S-diacylglycerol cysteine attachment. Transmembrane regions (helical) follow at residues 59–79 (YGLAIVVTTLIIRFALLPLMI), 129–149 (LAGCLPIFVQMPILFAFYHAI), 160–180 (FLWFDLGQADPYYILPVVAAI), 202–222 (MMLWLMPIMILIFAINFPAAL), and 223–243 (SLYWVVGNIFGIAQMYLIKGP).

The protein belongs to the OXA1/ALB3/YidC family. Type 2 subfamily.

The protein localises to the cell membrane. In terms of biological role, required for the insertion and/or proper folding and/or complex formation of integral membrane proteins into the membrane. Involved in integration of membrane proteins that insert both dependently and independently of the Sec translocase complex, as well as at least some lipoproteins. The sequence is that of Membrane protein insertase YidC 2 from Bacillus anthracis.